Here is a 162-residue protein sequence, read N- to C-terminus: UPF0460 protein y4xD (162 aa).

The protein belongs to the UPF0460 family.

This is UPF0460 protein y4xD from Sinorhizobium fredii (strain NBRC 101917 / NGR234).